Consider the following 148-residue polypeptide: Large ribosomal subunit protein uL15 (148 aa).

The disordered stretch occupies residues 1–51 (MNLSNLKPAEGSTKTRKRIGRGPGSGLGGTSTRGHKGAKSRSGYKNKIGFE). Gly residues predominate over residues 21–31 (RGPGSGLGGTS). Basic residues predominate over residues 33–44 (RGHKGAKSRSGY).

It belongs to the universal ribosomal protein uL15 family. Part of the 50S ribosomal subunit.

Binds to the 23S rRNA. This Parabacteroides distasonis (strain ATCC 8503 / DSM 20701 / CIP 104284 / JCM 5825 / NCTC 11152) protein is Large ribosomal subunit protein uL15.